We begin with the raw amino-acid sequence, 214 residues long: Alpha-S1-casein (214 aa).

The first 15 residues, 1-15, serve as a signal peptide directing secretion; that stretch reads MKLLILTCLVAVALA. Positions 59–91 are disordered; it reads IGSESTEDQAMEDAKQMKAGSSSSSEEIVPNSA. 9 positions are modified to phosphoserine: Ser-61, Ser-63, Ser-79, Ser-80, Ser-81, Ser-82, Ser-83, Ser-90, and Ser-130.

It belongs to the alpha-casein family. In terms of tissue distribution, mammary gland specific. Secreted in milk.

Its subcellular location is the secreted. Important role in the capacity of milk to transport calcium phosphate. This chain is Alpha-S1-casein (CSN1S1), found in Capra hircus (Goat).